The sequence spans 286 residues: Pyridoxal kinase PdxY (286 aa).

Substrate-binding positions include Ser9 and 44 to 45 (MQ). ATP contacts are provided by Asp111, Glu147, and Lys180. Asp221 serves as a coordination point for substrate.

The protein belongs to the pyridoxine kinase family. PdxY subfamily. As to quaternary structure, homodimer. It depends on Mg(2+) as a cofactor.

It catalyses the reaction pyridoxal + ATP = pyridoxal 5'-phosphate + ADP + H(+). It participates in cofactor metabolism; pyridoxal 5'-phosphate salvage; pyridoxal 5'-phosphate from pyridoxal: step 1/1. Functionally, pyridoxal kinase involved in the salvage pathway of pyridoxal 5'-phosphate (PLP). Catalyzes the phosphorylation of pyridoxal to PLP. This Burkholderia lata (strain ATCC 17760 / DSM 23089 / LMG 22485 / NCIMB 9086 / R18194 / 383) protein is Pyridoxal kinase PdxY.